The following is a 313-amino-acid chain: D-alanine--D-alanine ligase (313 aa).

The region spanning 108-308 (KLVWQQTGVP…YSELVVKVLA (201 aa)) is the ATP-grasp domain. 138-193 (VAKLGLPLFVKPASEGSSVAVLKVKTADALPAALSEAATHDKIVIVEKSIEGGGEY) is an ATP binding site. 3 residues coordinate Mg(2+): Asp262, Glu275, and Asn277.

The protein belongs to the D-alanine--D-alanine ligase family. Mg(2+) serves as cofactor. It depends on Mn(2+) as a cofactor.

The protein resides in the cytoplasm. The enzyme catalyses 2 D-alanine + ATP = D-alanyl-D-alanine + ADP + phosphate + H(+). It functions in the pathway cell wall biogenesis; peptidoglycan biosynthesis. Its function is as follows. Cell wall formation. In Burkholderia ambifaria (strain ATCC BAA-244 / DSM 16087 / CCUG 44356 / LMG 19182 / AMMD) (Burkholderia cepacia (strain AMMD)), this protein is D-alanine--D-alanine ligase.